Consider the following 52-residue polypeptide: uncharacterized protein (52 aa).

This is an uncharacterized protein from Escherichia coli.